Here is a 549-residue protein sequence, read N- to C-terminus: Beta-mannosyltransferase 3 (549 aa).

The Cytoplasmic segment spans residues 1 to 37 (MFESDLSFYSALLILCCPISIVFFKKFPIKGYTGANK). A helical membrane pass occupies residues 38 to 58 (VSLFLQCLIAILNLNILYSFI). The Extracellular portion of the chain corresponds to 59–549 (NSLTITLGHD…DTMGWDKLSR (491 aa)).

Belongs to the BMT family.

It is found in the membrane. Beta-mannosyltransferase involved in cell wall biosynthesis. Required for addition of the second beta-mannose residue to acid-stable fraction of cell wall phosphopeptidomannan, and in elongation of beta-mannose chains on the phosphopeptidomannan acid-labile fraction. The polypeptide is Beta-mannosyltransferase 3 (BMT3) (Candida albicans (strain SC5314 / ATCC MYA-2876) (Yeast)).